We begin with the raw amino-acid sequence, 95 residues long: Citrate lyase acyl carrier protein (95 aa).

Position 14 is an O-(phosphoribosyl dephospho-coenzyme A)serine (S14).

Belongs to the CitD family. As to quaternary structure, oligomer with a subunit composition of (alpha,beta,gamma)6.

It is found in the cytoplasm. Its function is as follows. Covalent carrier of the coenzyme of citrate lyase. In Haemophilus influenzae (strain 86-028NP), this protein is Citrate lyase acyl carrier protein.